The primary structure comprises 167 residues: Small ribosomal subunit protein uS5 (167 aa).

The S5 DRBM domain occupies 12 to 75 (LQEKLIAVNR…EKARRNMVTV (64 aa)).

It belongs to the universal ribosomal protein uS5 family. In terms of assembly, part of the 30S ribosomal subunit. Contacts proteins S4 and S8.

Its function is as follows. With S4 and S12 plays an important role in translational accuracy. In terms of biological role, located at the back of the 30S subunit body where it stabilizes the conformation of the head with respect to the body. The sequence is that of Small ribosomal subunit protein uS5 from Shewanella denitrificans (strain OS217 / ATCC BAA-1090 / DSM 15013).